Reading from the N-terminus, the 379-residue chain is Inactive 2'-5'-oligoadenylate synthase 1B (379 aa).

Residues 1–355 (MEQELRSIPA…VPTEVDIPSQ (355 aa)) are Cytoplasmic-facing. The helical; Anchor for type IV membrane protein transmembrane segment at 356–374 (NYFFHIICLIFWLLLRLIF) threads the bilayer. Residues 375–379 (GKHSV) are Extracellular-facing.

This sequence belongs to the 2-5A synthase family. In terms of assembly, interacts with OSBPL1A and ABCF3. As to expression, highly expressed in the brain, liver, spleen and heart.

It localises to the endoplasmic reticulum membrane. Functionally, does not have 2'-5'-OAS activity, but can bind double-stranded RNA. Displays antiviral activity against viruses via an alternative antiviral pathway independent of RNase L. The polypeptide is Inactive 2'-5'-oligoadenylate synthase 1B (Oas1b) (Rattus norvegicus (Rat)).